A 292-amino-acid polypeptide reads, in one-letter code: Ribosomal protein L11 methyltransferase (292 aa).

4 residues coordinate S-adenosyl-L-methionine: T136, G159, D181, and N228.

The protein belongs to the methyltransferase superfamily. PrmA family.

It localises to the cytoplasm. The catalysed reaction is L-lysyl-[protein] + 3 S-adenosyl-L-methionine = N(6),N(6),N(6)-trimethyl-L-lysyl-[protein] + 3 S-adenosyl-L-homocysteine + 3 H(+). Functionally, methylates ribosomal protein L11. This chain is Ribosomal protein L11 methyltransferase, found in Rhizobium johnstonii (strain DSM 114642 / LMG 32736 / 3841) (Rhizobium leguminosarum bv. viciae).